The primary structure comprises 46 residues: Protein PsbN (46 aa).

The chain crosses the membrane as a helical span at residues 10–30 (LAIIVLVVLLGLTGLGVYMAF).

This sequence belongs to the PsbN family.

Its subcellular location is the cellular thylakoid membrane. May play a role in photosystem I and II biogenesis. This is Protein PsbN from Prochlorococcus marinus (strain MIT 9211).